A 142-amino-acid chain; its full sequence is DNA-directed RNA polymerase subunit omega (142 aa).

A disordered region spans residues 93–142 (AWSVPEAGGDEGGDASELLDDEGEGAAAGAEPDFSEMDVPLADLADEDKI). The span at 100–116 (GGDEGGDASELLDDEGE) shows a compositional bias: acidic residues.

This sequence belongs to the RNA polymerase subunit omega family. The RNAP catalytic core consists of 2 alpha, 1 beta, 1 beta' and 1 omega subunit. When a sigma factor is associated with the core the holoenzyme is formed, which can initiate transcription.

The enzyme catalyses RNA(n) + a ribonucleoside 5'-triphosphate = RNA(n+1) + diphosphate. Functionally, promotes RNA polymerase assembly. Latches the N- and C-terminal regions of the beta' subunit thereby facilitating its interaction with the beta and alpha subunits. In Rhodospirillum centenum (strain ATCC 51521 / SW), this protein is DNA-directed RNA polymerase subunit omega.